Here is a 301-residue protein sequence, read N- to C-terminus: Probable alpha-L-glutamate ligase (301 aa).

The ATP-grasp domain maps to 104-287; that stretch reads LQLLSRKGIG…VAGMIFDFIE (184 aa). ATP contacts are provided by residues K141, 178–179, D187, and 211–213; these read EF and RSN. Mg(2+)-binding residues include D248, E260, and N262. Mn(2+) contacts are provided by D248, E260, and N262.

This sequence belongs to the RimK family. Mg(2+) is required as a cofactor. Requires Mn(2+) as cofactor.

This chain is Probable alpha-L-glutamate ligase, found in Vibrio parahaemolyticus serotype O3:K6 (strain RIMD 2210633).